The following is a 238-amino-acid chain: Opacity protein opA66 (238 aa).

Ala1 is a signal peptide. Disordered stretches follow at residues 88-109 and 162-183; these read NLQRRTSNGNRRDRKTENQENG and GARGTDPTVSSPYKNTQDAHQE. Residues 168–183 show a composition bias toward polar residues; that stretch reads PTVSSPYKNTQDAHQE.

The protein belongs to the opacity porin family.

It localises to the cell outer membrane. Implicated in a number of adherence functions. OPA proteins are implicated in pathogenesis and are subject to phase variation. The sequence is that of Opacity protein opA66 from Neisseria gonorrhoeae.